Here is a 234-residue protein sequence, read N- to C-terminus: Heme-copper oxidase subunit 2 (234 aa).

2 helical membrane-spanning segments follow: residues 13–33 (LFLL…AFFI) and 72–92 (LLFV…DETL). His-151, Cys-188, Cys-192, and His-196 together coordinate Cu cation.

This sequence belongs to the cytochrome c oxidase subunit 2 family.

The protein resides in the cell membrane. In Aeropyrum pernix (strain ATCC 700893 / DSM 11879 / JCM 9820 / NBRC 100138 / K1), this protein is Heme-copper oxidase subunit 2 (aoxA).